A 157-amino-acid polypeptide reads, in one-letter code: SsrA-binding protein (157 aa).

The span at 136 to 151 (KRETEKKRDWSREKGR) shows a compositional bias: basic and acidic residues. The tract at residues 136 to 157 (KRETEKKRDWSREKGRLLRARG) is disordered.

It belongs to the SmpB family.

The protein localises to the cytoplasm. Its function is as follows. Required for rescue of stalled ribosomes mediated by trans-translation. Binds to transfer-messenger RNA (tmRNA), required for stable association of tmRNA with ribosomes. tmRNA and SmpB together mimic tRNA shape, replacing the anticodon stem-loop with SmpB. tmRNA is encoded by the ssrA gene; the 2 termini fold to resemble tRNA(Ala) and it encodes a 'tag peptide', a short internal open reading frame. During trans-translation Ala-aminoacylated tmRNA acts like a tRNA, entering the A-site of stalled ribosomes, displacing the stalled mRNA. The ribosome then switches to translate the ORF on the tmRNA; the nascent peptide is terminated with the 'tag peptide' encoded by the tmRNA and targeted for degradation. The ribosome is freed to recommence translation, which seems to be the essential function of trans-translation. The protein is SsrA-binding protein of Rhodopseudomonas palustris (strain HaA2).